The chain runs to 278 residues: UPF0750 membrane protein YxkD (278 aa).

The next 5 helical transmembrane spans lie at 8-28, 46-66, 77-97, 101-121, and 145-165; these read VLML…FAIP, LFQW…LLIG, YTII…GWSI, ELII…GMII, and ISYA…FIIG.

Belongs to the UPF0750 family.

It localises to the cell membrane. In Bacillus subtilis (strain 168), this protein is UPF0750 membrane protein YxkD (yxkD).